The sequence spans 478 residues: NADH-ubiquinone oxidoreductase 49 kDa subunit, mitochondrial (478 aa).

Residues 1 to 42 (MATTLFRLAGRNAKRHCMRQSTTIAHNLNSTRAFSASALRRY) constitute a mitochondrion transit peptide. [4Fe-4S] cluster-binding residues include C341, C347, and C362.

Belongs to the complex I 49 kDa subunit family. In terms of assembly, complex I is composed of about 40 different subunits. [4Fe-4S] cluster serves as cofactor.

The protein localises to the mitochondrion inner membrane. The enzyme catalyses a ubiquinone + NADH + 5 H(+)(in) = a ubiquinol + NAD(+) + 4 H(+)(out). Core subunit of the mitochondrial membrane respiratory chain NADH dehydrogenase (Complex I) that is believed to belong to the minimal assembly required for catalysis. Complex I functions in the transfer of electrons from NADH to the respiratory chain. The immediate electron acceptor for the enzyme is believed to be ubiquinone. This is NADH-ubiquinone oxidoreductase 49 kDa subunit, mitochondrial (nuo-49) from Neurospora crassa (strain ATCC 24698 / 74-OR23-1A / CBS 708.71 / DSM 1257 / FGSC 987).